A 145-amino-acid chain; its full sequence is Sec-independent protein translocase protein TatB (145 aa).

A helical membrane pass occupies residues 1–21 (MLDVGMTELLCFAIIAILVLG).

It belongs to the TatB family. In terms of assembly, the Tat system comprises two distinct complexes: a TatABC complex, containing multiple copies of TatA, TatB and TatC subunits, and a separate TatA complex, containing only TatA subunits. Substrates initially bind to the TatABC complex, which probably triggers association of the separate TatA complex to form the active translocon.

It is found in the cell inner membrane. Part of the twin-arginine translocation (Tat) system that transports large folded proteins containing a characteristic twin-arginine motif in their signal peptide across membranes. Together with TatC, TatB is part of a receptor directly interacting with Tat signal peptides. TatB may form an oligomeric binding site that transiently accommodates folded Tat precursor proteins before their translocation. The sequence is that of Sec-independent protein translocase protein TatB from Acinetobacter baumannii (strain ATCC 17978 / DSM 105126 / CIP 53.77 / LMG 1025 / NCDC KC755 / 5377).